A 464-amino-acid chain; its full sequence is GDNF family receptor alpha-2 (464 aa).

Residues 1 to 21 (MILANAFCLFFFLDETLRSLA) form the signal peptide. Cystine bridges form between C40–C93, C47–C53, C63–C78, C95–C105, C161–C222, C168–C174, C185–C200, C195–C241, C224–C229, C251–C323, C258–C264, C275–C293, C285–C347, and C325–C335. N-linked (GlcNAc...) asparagine glycosylation occurs at N52. N357 carries an N-linked (GlcNAc...) asparagine glycan. Over residues 360 to 374 (DVNLSPKSPPFQATQ) the composition is skewed to polar residues. Residues 360–392 (DVNLSPKSPPFQATQAPRVDKTPSLPDDLSDST) form a disordered region. Residues 381–392 (TPSLPDDLSDST) show a composition bias toward low complexity. An N-linked (GlcNAc...) asparagine glycan is attached at N413. The GPI-anchor amidated asparagine moiety is linked to residue N440. A propeptide spans 441–464 (SGPRRTRPSAALTAASFLMLKLAL) (removed in mature form).

Belongs to the GDNFR family. In terms of assembly, interacts with NRTN ligand and RET: forms a 2:2:2 ternary complex composed of NRTN ligand, GFRA2 and RET receptor. Also forms a 4:4:4 tetrameric complex composed of 4 copies of NRTN ligand, GFRA2 and RET receptor, which prevents endocytosis of RET. Interacts with SORL1.

It is found in the cell membrane. Receptor for neurturin (NRTN), a growth factor that supports the survival of sympathetic neurons. NRTN-binding leads to autophosphorylation and activation of the RET receptor. Also able to mediate GDNF signaling through the RET tyrosine kinase receptor. This Bos taurus (Bovine) protein is GDNF family receptor alpha-2 (GFRA2).